Reading from the N-terminus, the 172-residue chain is Probable chorismate pyruvate-lyase (172 aa).

Substrate is bound by residues M37, R79, L117, and E158.

It belongs to the UbiC family.

The protein resides in the cytoplasm. It carries out the reaction chorismate = 4-hydroxybenzoate + pyruvate. It participates in cofactor biosynthesis; ubiquinone biosynthesis. In terms of biological role, removes the pyruvyl group from chorismate, with concomitant aromatization of the ring, to provide 4-hydroxybenzoate (4HB) for the ubiquinone pathway. The sequence is that of Probable chorismate pyruvate-lyase from Bartonella quintana (strain Toulouse) (Rochalimaea quintana).